The primary structure comprises 61 residues: Large ribosomal subunit protein uL30 (61 aa).

It belongs to the universal ribosomal protein uL30 family. In terms of assembly, part of the 50S ribosomal subunit.

This is Large ribosomal subunit protein uL30 from Exiguobacterium sp. (strain ATCC BAA-1283 / AT1b).